We begin with the raw amino-acid sequence, 376 residues long: Transcription factor Sp6 (376 aa).

A disordered region spans residues 1 to 70 (MLTAVCGSLG…VDFSQGYELP (70 aa)). The 9aaTAD motif lies at 118 to 126 (GSWWDLHPG). The interval 164-224 (PPPHPHPHHL…SRRSVPRSSG (61 aa)) is disordered. 3 C2H2-type zinc fingers span residues 254–278 (HNCH…LRWH), 284–308 (FVCN…LQTH), and 314–336 (FPCA…MKTH). Residues 334–343 (KTHEGAKEEA) show a composition bias toward basic and acidic residues. Positions 334–376 (KTHEGAKEEAAAAAQGEGKAGGVVEPPGGKGKREAEGSSASSN) are disordered. Over residues 344–360 (AAAAQGEGKAGGVVEPP) the composition is skewed to low complexity.

It belongs to the Sp1 C2H2-type zinc-finger protein family. Ubiquitous. Preferentially expressed by proliferating epithelial cells of teeth, hair follicles and limbs.

It localises to the nucleus. In terms of biological role, promotes cell proliferation. Plays a role in tooth germ growth. Plays a role in the control of enamel mineralization. Binds the AMBN promoter. This Mus musculus (Mouse) protein is Transcription factor Sp6 (Sp6).